The chain runs to 290 residues: MASTPAEYIQHHLQNLTYGKLPAGYERADGSILDQATWTIAQTGAEARDMGFMAVHLDTLGWSLLMGAIFILLFRSAAKAATAGVPGKLQNLVEMCVEFVEGVVKDTFHGRNPLIAPLALTIFVWVFLMNSLKWIPVDYIPGIAHLLGLPAFKIVPTADPNGTFGLSLGVFILILFYSFKVKGFGGFTKELAFTPFNHWSLVPFNLFLEILGLLTKPLSLALRLFGNMYAGEVVFILIALLPFYVQWTLNVPWAIFHILVIPLQAFIFMVLTVVYLSSAHEDHGHAELTP.

7 consecutive transmembrane segments (helical) span residues 54-74, 115-135, 136-156, 164-184, 201-221, 233-253, and 254-274; these read AVHL…ILLF, IAPL…LKWI, PVDY…KIVP, FGLS…VKGF, LVPF…LSLA, VVFI…NVPW, and AIFH…LTVV.

This sequence belongs to the ATPase A chain family. As to quaternary structure, F-type ATPases have 2 components, CF(1) - the catalytic core - and CF(0) - the membrane proton channel. CF(1) has five subunits: alpha(3), beta(3), gamma(1), delta(1), epsilon(1). CF(0) has three main subunits: a(1), b(2) and c(9-12). The alpha and beta chains form an alternating ring which encloses part of the gamma chain. CF(1) is attached to CF(0) by a central stalk formed by the gamma and epsilon chains, while a peripheral stalk is formed by the delta and b chains.

It is found in the cell inner membrane. Functionally, key component of the proton channel; it plays a direct role in the translocation of protons across the membrane. In Stutzerimonas stutzeri (strain A1501) (Pseudomonas stutzeri), this protein is ATP synthase subunit a.